Consider the following 635-residue polypeptide: Glutamine sensor PIB2 (635 aa).

The segment at 1–110 is disordered; that stretch reads MTALHSVSKT…GTGFVDRKQQ (110 aa). The tract at residues 1–164 is may play a role in attenuating TORC1 signaling; the sequence is MTALHSVSKT…KTLPFTDDQR (164 aa). The span at 33–44 shows a compositional bias: basic and acidic residues; that stretch reads RNHDYRGRKGDE. Serine 46 and serine 53 each carry phosphoserine. Threonine 56 bears the Phosphothreonine mark. Polar residues predominate over residues 67–85; it reads STHSEQSILSSISLKSMVN. 6 positions are modified to phosphoserine: serine 73, serine 113, serine 124, serine 148, serine 165, and serine 174. 2 disordered regions span residues 123-181 and 224-254; these read NSAE…VSRG and SSNL…TSKV. The span at 238-254 shows a compositional bias: low complexity; sequence SSSSSTSSVSSSSTSKV. A phosphoserine mark is found at serine 300, serine 309, and serine 381. The tract at residues 304 to 440 is required for interaction with TORC1; sequence LPQPASSTNL…PTISNRNSAR (137 aa). The FYVE-type; atypical zinc-finger motif lies at 452–527; that stretch reads DSKRNSCRYC…ICDDCLVEYE (76 aa). Positions 458, 461, 474, 477, 482, 485, 519, and 522 each coordinate Zn(2+). Disordered stretches follow at residues 534 to 557 and 570 to 623; these read HNAN…DNRK and ALFR…GSVI. 2 stretches are compositionally biased toward acidic residues: residues 543–553 and 601–616; these read INVEEGEDDDN and EEAD…EEGN. The segment at 620 to 635 is may be required for TORC1 activation; it reads GSVIGSVPANWNWSSF.

In terms of assembly, interacts with the TORC1 complex when activated by glutamine or cysteine. Interacts with TOR1; glutamine enhances the interaction. Interacts with KOG1; glutamine enhances the interaction. Interacts with TCO89. Interacts with LST8; glutamine enhances the interaction. Interacts with TOR2; glutamine enhances the interaction.

The protein localises to the vacuole membrane. With respect to regulation, activated by glutamine. May also be activated by cysteine. Its function is as follows. Functions as an intracellular glutamine sensor that directly activates the TORC1 signaling pathway, to promote cell growth when glutamine is available. May play a role in repressing NPR1 activity independently of TORC1 signaling. In Saccharomyces cerevisiae (strain ATCC 204508 / S288c) (Baker's yeast), this protein is Glutamine sensor PIB2.